The sequence spans 177 residues: Centromere protein R (177 aa).

Residue Lys-8 forms a Glycyl lysine isopeptide (Lys-Gly) (interchain with G-Cter in SUMO2) linkage. Residues Leu-9–Leu-13 carry the LXXLL motif motif. Residue Ser-17 is modified to Phosphoserine. The interval Pro-20–Ser-50 is DD1. Lys-22 is covalently cross-linked (Glycyl lysine isopeptide (Lys-Gly) (interchain with G-Cter in SUMO2)). A Phosphoserine modification is found at Ser-28. Residues Met-41 to Ser-50 show a composition bias toward polar residues. The disordered stretch occupies residues Met-41 to Lys-81. The Nuclear localization signal signature appears at Lys-63–Lys-66. The residue at position 71 (Ser-71) is a Phosphoserine. Residues Asn-83–Leu-113 are a coiled coil. The short motif at Leu-172–Leu-176 is the LXXIL motif element.

Homodimer; mediated by the coiled coil domain. Isoform 3, but not other isoforms, interacts with the cytoplasmic tail of integrin ITGB3. The relevance of the interaction with ITGB3 is however uncertain, since isoform 3 is mainly nuclear. Interacts with CCNA2 and MTA1. Interacts with NFKB1 NF-kappa-B subunit. Component of the CENPA-CAD complex, composed of CENPI, CENPK, CENPL, CENPO, CENPP, CENPQ, CENPR and CENPS. The CENPA-CAD complex interacts with the CENPA-NAC complex, at least composed of CENPA, CENPC, CENPH, CENPM, CENPN, CENPT and CENPU. Interacts with TASOR. Widely expressed. Expressed in spleen, thymus, prostate, ovary, small intestine and white blood cells. Highly expressed in testis and colon. Isoform 4 is expressed in platelets, lymphocytes and granulocytes.

The protein resides in the nucleus. It localises to the chromosome. It is found in the centromere. Its subcellular location is the kinetochore. The protein localises to the cytoplasm. Its function is as follows. Transcription coregulator that can have both coactivator and corepressor functions. Isoform 1, but not other isoforms, is involved in the coactivation of nuclear receptors for retinoid X (RXRs) and thyroid hormone (TRs) in a ligand-dependent fashion. In contrast, it does not coactivate nuclear receptors for retinoic acid, vitamin D, progesterone receptor, nor glucocorticoid. Acts as a coactivator for estrogen receptor alpha. Acts as a transcriptional corepressor via its interaction with the NFKB1 NF-kappa-B subunit, possibly by interfering with the transactivation domain of NFKB1. Induces apoptosis in breast cancer cells, but not in other cancer cells, via a caspase-2 mediated pathway that involves mitochondrial membrane permeabilization but does not require other caspases. May also act as an inhibitor of cyclin A-associated kinase. Also acts a component of the CENPA-CAD (nucleosome distal) complex, a complex recruited to centromeres which is involved in assembly of kinetochore proteins, mitotic progression and chromosome segregation. May be involved in incorporation of newly synthesized CENPA into centromeres via its interaction with the CENPA-NAC complex. The sequence is that of Centromere protein R (ITGB3BP) from Homo sapiens (Human).